The sequence spans 413 residues: Eukaryotic initiation factor 4A-14 (413 aa).

A Q motif motif is present at residues 40-68 (DSFDAMGLQENLLRGIYAYGFEKPSAIQQ). The Helicase ATP-binding domain maps to 71 to 241 (IVPFCKGLDV…RKFMSKPVRI (171 aa)). 84 to 91 (AQSGTGKT) is an ATP binding site. A DEAD box motif is present at residues 189-192 (DEAD). In terms of domain architecture, Helicase C-terminal spans 252-413 (GIKQFYVNVD…ELPANVADLL (162 aa)).

The protein belongs to the DEAD box helicase family. eIF4A subfamily. As to quaternary structure, eIF4F is a multi-subunit complex, the composition of which varies with external and internal environmental conditions. It is composed of at least EIF4A, EIF4E and EIF4G.

The enzyme catalyses ATP + H2O = ADP + phosphate + H(+). Its function is as follows. ATP-dependent RNA helicase which is a subunit of the eIF4F complex involved in cap recognition and is required for mRNA binding to ribosome. In the current model of translation initiation, eIF4A unwinds RNA secondary structures in the 5'-UTR of mRNAs which is necessary to allow efficient binding of the small ribosomal subunit, and subsequent scanning for the initiator codon. The chain is Eukaryotic initiation factor 4A-14 from Nicotiana tabacum (Common tobacco).